The following is a 507-amino-acid chain: Beta-glucosidase 3 (507 aa).

The signal sequence occupies residues 1–23; it reads MELTLSLLTIFLLFFALSGRCSD. Gln41 is an a beta-D-glucoside binding site. Asn64 carries an N-linked (GlcNAc...) asparagine glycan. A beta-D-glucoside is bound by residues His138 and 183–184; that span reads NE. Catalysis depends on Glu184, which acts as the Proton donor. A disulfide bond links Cys203 and Cys210. N-linked (GlcNAc...) asparagine glycosylation is found at Asn209 and Asn214. Tyr326 contacts a beta-D-glucoside. N-linked (GlcNAc...) asparagine glycosylation is present at Asn361. Glu394 serves as a coordination point for a beta-D-glucoside. Catalysis depends on Glu394, which acts as the Nucleophile. Residue Asn429 is glycosylated (N-linked (GlcNAc...) asparagine). Residues Trp439 and Phe455 each contribute to the a beta-D-glucoside site. Asn461, Asn485, and Asn500 each carry an N-linked (GlcNAc...) asparagine glycan.

The protein belongs to the glycosyl hydrolase 1 family.

The enzyme catalyses Hydrolysis of terminal, non-reducing beta-D-glucosyl residues with release of beta-D-glucose.. The protein is Beta-glucosidase 3 of Arabidopsis thaliana (Mouse-ear cress).